A 688-amino-acid polypeptide reads, in one-letter code: Elongation factor G (688 aa).

The tr-type G domain maps to 6-280 (KLFRNFGIMA…AVVDFLPSPI (275 aa)). GTP is bound by residues 15-22 (AHIDAGKT), 79-83 (DTPGH), and 133-136 (NKMD).

This sequence belongs to the TRAFAC class translation factor GTPase superfamily. Classic translation factor GTPase family. EF-G/EF-2 subfamily.

It localises to the cytoplasm. Functionally, catalyzes the GTP-dependent ribosomal translocation step during translation elongation. During this step, the ribosome changes from the pre-translocational (PRE) to the post-translocational (POST) state as the newly formed A-site-bound peptidyl-tRNA and P-site-bound deacylated tRNA move to the P and E sites, respectively. Catalyzes the coordinated movement of the two tRNA molecules, the mRNA and conformational changes in the ribosome. The sequence is that of Elongation factor G from Ureaplasma parvum serovar 3 (strain ATCC 27815 / 27 / NCTC 11736).